The sequence spans 281 residues: Nucleoid occlusion protein (281 aa).

Residues 1-26 are disordered; the sequence is MKHPFSRLFSFGEKEQEEAGGKQERE. Over residues 12-26 the composition is skewed to basic and acidic residues; the sequence is GEKEQEEAGGKQERE. Positions 145–164 form a DNA-binding region, H-T-H motif; sequence EALAQRLGKGQSTIANKLRL.

Belongs to the ParB family.

Its subcellular location is the cytoplasm. It is found in the nucleoid. Effects nucleoid occlusion by binding relatively nonspecifically to DNA and preventing the assembly of the division machinery in the vicinity of the nucleoid, especially under conditions that disturb the cell cycle. It helps to coordinate cell division and chromosome segregation by preventing the formation of the Z ring through the nucleoid, which would cause chromosome breakage. The sequence is that of Nucleoid occlusion protein from Geobacillus thermodenitrificans (strain NG80-2).